Consider the following 533-residue polypeptide: Probable intron-encoded endonuclease 3 (533 aa).

The next 3 membrane-spanning stretches (helical) occupy residues 1–21 (MYLSIIILPLLGSIVAGFFGR), 30–50 (LITCLSVIITTGLAILAFFEV), and 81–101 (LTVAMLIPVLIISSLVHIYSI). The interval 1–108 (MYLSIIILPL…YSISYMSHDP (108 aa)) is ndh-5 exon 1 encoded. The interval 109–533 (RGRVRGKRVY…SISLLLGRRR (425 aa)) is ndh-5 intron 1 encoded.

It in the N-terminal section; belongs to the complex I subunit 5 family. The protein in the C-terminal section; belongs to the LAGLIDADG endonuclease family.

The protein localises to the mitochondrion membrane. Functionally, mitochondrial DNA endonuclease involved in intron homing. The polypeptide is Probable intron-encoded endonuclease 3 (Neurospora crassa (strain ATCC 24698 / 74-OR23-1A / CBS 708.71 / DSM 1257 / FGSC 987)).